A 477-amino-acid polypeptide reads, in one-letter code: Protein RdxB (477 aa).

The Cytoplasmic portion of the chain corresponds to 1-29 (MTSPDTQTSSLYAKREPVFPKRVSGKFRS). Residues 30 to 50 (LKWWIMGVTLGIYYIAPWLRW) form a helical membrane-spanning segment. Residues 51 to 81 (DRGPNLPDQAILVDLANRRFFFFMIEIWPHE) lie on the Periplasmic side of the membrane. Residues 82–102 (FYFVAGLLIMAGLGLFLFTSA) form a helical membrane-spanning segment. The Cytoplasmic segment spans residues 103 to 154 (AGRVWCGYACPQTVWTDLFILVERWVEGDRNARIRLLRQRWDLEKTRKYLTK). The helical transmembrane segment at 155–175 (WTLWLLIGLATGGAWVFYFTD) threads the bilayer. Residues 176–189 (APTLLVDLLTGNAH) lie on the Periplasmic side of the membrane. The chain crosses the membrane as a helical span at residues 190-210 (PVAYITMATLTATTFAFGGFA). Residues 211 to 338 (REQICIYACP…SAWRHVFRLR (128 aa)) lie on the Cytoplasmic side of the membrane. In terms of domain architecture, 4Fe-4S ferredoxin-type spans 253 to 281 (EPLSPDQGDCIDCMACVNVCPMGIDIRDG). [4Fe-4S] cluster-binding residues include cysteine 262, cysteine 265, cysteine 268, cysteine 272, cysteine 286, cysteine 289, cysteine 292, and cysteine 296. The helical transmembrane segment at 339–359 (TLIYTALWSGVGLALIVALFL) threads the bilayer. At 360-477 (RSPIDINVTP…HDTIFNGRGN (118 aa)) the chain is on the periplasmic side.

[4Fe-4S] cluster is required as a cofactor.

The protein resides in the cell membrane. In terms of biological role, involved in a membrane generated redox signal; required to maintain repression of photosynthesis gene expression in the presence of oxygen. The polypeptide is Protein RdxB (rdxB) (Cereibacter sphaeroides (strain ATCC 17023 / DSM 158 / JCM 6121 / CCUG 31486 / LMG 2827 / NBRC 12203 / NCIMB 8253 / ATH 2.4.1.) (Rhodobacter sphaeroides)).